A 513-amino-acid polypeptide reads, in one-letter code: Cytochrome P450 monooxygenase CYP3 (513 aa).

The segment at 1-21 (MLPRSLGHSTSELSPPFDGPN) is disordered. Cys-451 provides a ligand contact to heme.

The protein belongs to the cytochrome P450 family. Requires heme as cofactor.

It functions in the pathway secondary metabolite biosynthesis. In terms of biological role, cytochrome P450 monooxygenase; part of the gene cluster that mediates the biosynthesis of a tyrosine-derived cytochalasan acting as a fungal signal recognized by resistant rice plants and leads to avirulence in Pi33 resistant rice cultivars. The first step in the pathway is catalyzed by the hybrid PKS-NRPS ACE1, assisted by the enoyl reductase RAP1, that are responsible for fusion of the tyrosine precursor and the polyketide backbone. The polyketide synthase module (PKS) of ACE1 is responsible for the synthesis of the polyketide backbone and the downstream nonribosomal peptide synthetase (NRPS) amidates the carboxyl end of the polyketide with the tyrosine precursor. Because ACE1 lacks a designated enoylreductase (ER) domain, the required activity is provided the enoyl reductase RAP1. Reduction by the hydrolyase ORFZ, followed by dehydration and intra-molecular Diels-Alder cyclization by the Diels-Alderase ORF3 then yield the required isoindolone-fused macrocycle. A number of oxidative steps catalyzed by the tailoring enzymes identified within the cluster, including cytochrome P450 monooxygenases CYP1 to CYP4, the FAD-linked oxidoreductase OXR2 and the short-chain dehydrogenase/reductase OXR1, are further required to afford the final cytochalasans that confer avirulence and which have still to be identified. The monooxygenase CYP1 has been shown to be a site-selective C-18 hydroxylase whereas the function of CYP3 is the site-selective epoxidation of the C-6/C-7 olefin that is present in some intermediate compounds. Finally, SYN2 and RAP2 are not required for avirulence in Pi33 resistant rice cultivars. This is Cytochrome P450 monooxygenase CYP3 from Pyricularia oryzae (strain 70-15 / ATCC MYA-4617 / FGSC 8958) (Rice blast fungus).